The sequence spans 535 residues: Suppressor of cytokine signaling 6 (535 aa).

Positions 80–89 (RLSAKQKSKG) are enriched in basic residues. A disordered region spans residues 80 to 105 (RLSAKQKSKGKAGTPSGSSADEDTFS). The region spanning 384 to 491 (WYWGPITRWE…TYPVRLTNPV (108 aa)) is the SH2 domain. Positions 486-535 (RLTNPVSRFMQVRSLQYLCRFVIRQYTRIDLIQKLPLPNKMKDYLQEKHY) constitute an SOCS box domain.

Interacts with RBCK1. Interacts with phosphorylated IRS4. Interacts with PIM3. Interacts with KIT (phosphorylated).

It participates in protein modification; protein ubiquitination. SOCS family proteins form part of a classical negative feedback system that regulates cytokine signal transduction. May be a substrate recognition component of a SCF-like ECS (Elongin BC-CUL2/5-SOCS-box protein) E3 ubiquitin-protein ligase complex which mediates the ubiquitination and subsequent proteasomal degradation of target proteins. Regulates KIT degradation by ubiquitination of the tyrosine-phosphorylated receptor. This chain is Suppressor of cytokine signaling 6 (SOCS6), found in Homo sapiens (Human).